Reading from the N-terminus, the 211-residue chain is Pyridoxine/pyridoxamine 5'-phosphate oxidase (211 aa).

Residues 7-10 and Lys-65 contribute to the substrate site; that span reads RREY. Residues 60–65, 75–76, Arg-81, Lys-82, and Gln-104 each bind FMN; these read RIVLLK and YT. Residues Tyr-122, Arg-126, and Ser-130 each coordinate substrate. FMN-binding positions include 139–140 and Trp-184; that span reads QS. 190-192 provides a ligand contact to substrate; sequence RLH. Arg-194 provides a ligand contact to FMN.

It belongs to the pyridoxamine 5'-phosphate oxidase family. In terms of assembly, homodimer. FMN serves as cofactor.

It carries out the reaction pyridoxamine 5'-phosphate + O2 + H2O = pyridoxal 5'-phosphate + H2O2 + NH4(+). The catalysed reaction is pyridoxine 5'-phosphate + O2 = pyridoxal 5'-phosphate + H2O2. The protein operates within cofactor metabolism; pyridoxal 5'-phosphate salvage; pyridoxal 5'-phosphate from pyridoxamine 5'-phosphate: step 1/1. It functions in the pathway cofactor metabolism; pyridoxal 5'-phosphate salvage; pyridoxal 5'-phosphate from pyridoxine 5'-phosphate: step 1/1. Its function is as follows. Catalyzes the oxidation of either pyridoxine 5'-phosphate (PNP) or pyridoxamine 5'-phosphate (PMP) into pyridoxal 5'-phosphate (PLP). The chain is Pyridoxine/pyridoxamine 5'-phosphate oxidase from Photobacterium profundum (strain SS9).